The primary structure comprises 202 residues: Protein GrpE 1 (202 aa).

This sequence belongs to the GrpE family. As to quaternary structure, homodimer.

It localises to the cytoplasm. Its function is as follows. Participates actively in the response to hyperosmotic and heat shock by preventing the aggregation of stress-denatured proteins, in association with DnaK and GrpE. It is the nucleotide exchange factor for DnaK and may function as a thermosensor. Unfolded proteins bind initially to DnaJ; upon interaction with the DnaJ-bound protein, DnaK hydrolyzes its bound ATP, resulting in the formation of a stable complex. GrpE releases ADP from DnaK; ATP binding to DnaK triggers the release of the substrate protein, thus completing the reaction cycle. Several rounds of ATP-dependent interactions between DnaJ, DnaK and GrpE are required for fully efficient folding. The sequence is that of Protein GrpE 1 from Buchnera aphidicola subsp. Schizaphis graminum (strain Sg).